A 228-amino-acid polypeptide reads, in one-letter code: MQKLKQQVFEANMDLPHYGLVTFTWGNVSAIDRERGLVVIKPSGVAYETMKADDMVVVDMSGNVVEGEYRPSSDTATHLELYRRYPSLGGIVHTHSTHATAWAQAGLAIPALGTTHADYFFGDIPCTRGLSEEEVQGEYELNTGKVIIETLGDAEPLHTPGIVVYQHGPFAWGKDAHDAVHNAVVMEEVAKMAWIARSINPQLNHIDSFLMNKHFMRKHGPNAYYGQK.

Residues 26-27 (GN), 43-44 (SG), and 72-73 (SS) each bind substrate. Residues D74, H93, and H95 each contribute to the Zn(2+) site. The active-site Proton donor/acceptor is D118. Residue H167 participates in Zn(2+) binding. Residue Y225 is the Proton donor/acceptor of the active site.

Belongs to the aldolase class II family. AraD/FucA subfamily. Zn(2+) is required as a cofactor.

The catalysed reaction is L-ribulose 5-phosphate = D-xylulose 5-phosphate. It participates in cofactor degradation; L-ascorbate degradation; D-xylulose 5-phosphate from L-ascorbate: step 4/4. In terms of biological role, catalyzes the isomerization of L-ribulose 5-phosphate to D-xylulose 5-phosphate. Is involved in the anaerobic L-ascorbate utilization. This Escherichia coli O6:K15:H31 (strain 536 / UPEC) protein is L-ribulose-5-phosphate 4-epimerase UlaF.